The chain runs to 186 residues: Ribosome-recycling factor (186 aa).

This sequence belongs to the RRF family.

The protein localises to the cytoplasm. Its function is as follows. Responsible for the release of ribosomes from messenger RNA at the termination of protein biosynthesis. May increase the efficiency of translation by recycling ribosomes from one round of translation to another. This Chlorobaculum tepidum (strain ATCC 49652 / DSM 12025 / NBRC 103806 / TLS) (Chlorobium tepidum) protein is Ribosome-recycling factor.